A 259-amino-acid chain; its full sequence is Beta-glucanase (259 aa).

The first 31 residues, 1–31 (MVKSKYLVFISVFSLLFGVFVVGFSHQGVKA), serve as a signal peptide directing secretion. In terms of domain architecture, GH16 spans 35-255 (RPMGTAFYES…WVRYTPLQNY (221 aa)). Glu142 acts as the Nucleophile in catalysis. Glu146 serves as the catalytic Proton donor.

It belongs to the glycosyl hydrolase 16 family.

The enzyme catalyses Hydrolysis of (1-&gt;4)-beta-D-glucosidic linkages in beta-D-glucans containing (1-&gt;3)- and (1-&gt;4)-bonds.. Hydrolyzes B-glucans containing mixed beta-1,3 and beta-1,4 linkages. The sequence is that of Beta-glucanase (bglBB) from Brevibacillus brevis (Bacillus brevis).